We begin with the raw amino-acid sequence, 429 residues long: Adenylosuccinate synthetase (429 aa).

Residues 12–18 (GDEGKGK) and 40–42 (GHT) contribute to the GTP site. Aspartate 13 serves as the catalytic Proton acceptor. The Mg(2+) site is built by aspartate 13 and glycine 40. IMP contacts are provided by residues 13–16 (DEGK), 38–41 (NAGH), threonine 128, arginine 142, glutamine 223, threonine 238, and arginine 302. Histidine 41 functions as the Proton donor in the catalytic mechanism. A substrate-binding site is contributed by 298–304 (VNTGRPR). Residues arginine 304, 330 to 332 (KLD), and 412 to 414 (GVG) contribute to the GTP site.

Belongs to the adenylosuccinate synthetase family. As to quaternary structure, homodimer. Mg(2+) is required as a cofactor.

The protein localises to the cytoplasm. The catalysed reaction is IMP + L-aspartate + GTP = N(6)-(1,2-dicarboxyethyl)-AMP + GDP + phosphate + 2 H(+). Its pathway is purine metabolism; AMP biosynthesis via de novo pathway; AMP from IMP: step 1/2. In terms of biological role, plays an important role in the de novo pathway of purine nucleotide biosynthesis. Catalyzes the first committed step in the biosynthesis of AMP from IMP. In Kocuria rhizophila (strain ATCC 9341 / DSM 348 / NBRC 103217 / DC2201), this protein is Adenylosuccinate synthetase.